The following is a 344-amino-acid chain: Dihydroorotate dehydrogenase (quinone) (344 aa).

FMN contacts are provided by residues 61-65 (AGLDK) and threonine 85. Position 65 (lysine 65) interacts with substrate. 110 to 114 (NRMGF) is a substrate binding site. Asparagine 138 and asparagine 171 together coordinate FMN. Residue asparagine 171 coordinates substrate. Serine 174 functions as the Nucleophile in the catalytic mechanism. Residue asparagine 176 participates in substrate binding. Residues lysine 216 and threonine 244 each contribute to the FMN site. Residue 245–246 (NT) participates in substrate binding. FMN contacts are provided by residues glycine 267, glycine 296, and 317–318 (YS).

The protein belongs to the dihydroorotate dehydrogenase family. Type 2 subfamily. As to quaternary structure, monomer. The cofactor is FMN.

It is found in the cell membrane. The catalysed reaction is (S)-dihydroorotate + a quinone = orotate + a quinol. The protein operates within pyrimidine metabolism; UMP biosynthesis via de novo pathway; orotate from (S)-dihydroorotate (quinone route): step 1/1. Catalyzes the conversion of dihydroorotate to orotate with quinone as electron acceptor. The protein is Dihydroorotate dehydrogenase (quinone) of Psychrobacter cryohalolentis (strain ATCC BAA-1226 / DSM 17306 / VKM B-2378 / K5).